We begin with the raw amino-acid sequence, 341 residues long: THO complex subunit 6 homolog (341 aa).

WD repeat units follow at residues 22-61 (RLHMTIFSQSVSPCGKFLAAGNNYGQIAIFSLSAALSSEA), 74-112 (AHDGPVYSMVSTDRHLLSAGDGEVKGWLWAEILKKGCKE), 124-165 (LEVP…RALR), 166-205 (GHTDYIHCLALRERSPEVLSGGEDGAVRLWDLRIAKEVQT), 215-254 (SRPHNGRWIGCLATDSDWMVCGGGPALTLWHLRSSTPTTV), 256-293 (PIRAPQKHVTFYQDLILSAGQGCCVNHWQLSGELKAQV), and 295-339 (GSSP…AFSL). Serine 180 bears the Phosphoserine mark.

This sequence belongs to the WD repeat THOC6 family. Component of the THO subcomplex, which is composed of THOC1, THOC2, THOC3, THOC5, THOC6 and THOC7. The THO subcomplex interacts with DDX39B to form the THO-DDX39B complex which multimerizes into a 28-subunit tetrameric assembly. Component of the transcription/export (TREX) complex at least composed of ALYREF/THOC4, DDX39B, SARNP/CIP29, CHTOP and the THO subcomplex; in the complex interacts with THOC5; together with THOC5 and THOC7, plays a key structural role in the oligomerization of the THO-DDX39B complex. TREX seems to have a dynamic structure involving ATP-dependent remodeling.

Its subcellular location is the nucleus. It is found in the nucleus speckle. Its function is as follows. Component of the THO subcomplex of the TREX complex which is thought to couple mRNA transcription, processing and nuclear export, and which specifically associates with spliced mRNA and not with unspliced pre-mRNA. Plays a key structural role in the oligomerization of the THO-DDX39B complex. TREX is recruited to spliced mRNAs by a transcription-independent mechanism, binds to mRNA upstream of the exon-junction complex (EJC) and is recruited in a splicing- and cap-dependent manner to a region near the 5' end of the mRNA where it functions in mRNA export to the cytoplasm via the TAP/NXF1 pathway. Plays a role in apoptosis negative control involved in brain development. The polypeptide is THO complex subunit 6 homolog (Thoc6) (Mus musculus (Mouse)).